Consider the following 882-residue polypeptide: MNASAKFTTSQIRSDFLEFFKGKGHTIVPSAPLVPGNDPTLLFTNSGMVQFKDVFLGAEKRSYVRAADVQRCLRAGGKHNDLDQVGYTARHHTFFEMLGNWSFGDYFKKDAIAWAWELLTQVWKLPAERLLVTVYQTDDEAYALWRDMVGVPEERIVRIGDNKGAPFASDNFWQMADTGPCGPCTEIFYDHGDHIAGGPPGSPDEDGDRFIEIWNLVFMQFDRQPDGTLVPLPAPCVDTGMGLERLAAILQHVHTNYEIDLFQALIRKASELTGTADLENKSLRVIADHIRACSFLIVDGVLPSNEGRGYVLRRIIRRALRHGWMLGVRQPFFSKLVPTLVEQMGEAYPELPAAVDTVTRALQAEEERFAETLDAGMKIFEDVAGKASNGVIPGVDAFRLYDTYGFPLDLTQDIARERDLTVDIAGFDAAMEQQRETARAAGKFGGGVTLPAELVATLSPTLFLGYDRLQADGLTVLALLKDGRPVQSADAGDAVIVITNQTPFYAESGGQVGDTGVLTGNGVRLAVDDTQKFAGQFHGHVGTLSEGGLKVGDVLSGQVDGERRGATILNHSATHLLHAALREVLGSHVQQKGSLVAPDRLRFDFSHFQPISAEELAVIERKVNQQVRANNAAEVHNMGMQEALDFGAMALFGEKYGEHVRVLKMGDYSTELCGGTHVNRTGDIGLFKITSEGGVSAGVRRIEAVTGQGALDYVDAEEARLAEAAELLGGSAADVVEKIRALGQRQKQLERELEAVKAKVAAGATADLSGQAVEVAGVKVLAARLEGFDAKALRDAMDRLKQQLGDAVIVLAGAQDGKAALVAGVNGSAMGKVKAGELLSHIASQIGGKGGGRPDLAQGGGEDGPALATALAAVVEWVSPRL.

Zn(2+) contacts are provided by His571, His575, Cys673, and His677.

Belongs to the class-II aminoacyl-tRNA synthetase family. It depends on Zn(2+) as a cofactor.

Its subcellular location is the cytoplasm. The catalysed reaction is tRNA(Ala) + L-alanine + ATP = L-alanyl-tRNA(Ala) + AMP + diphosphate. In terms of biological role, catalyzes the attachment of alanine to tRNA(Ala) in a two-step reaction: alanine is first activated by ATP to form Ala-AMP and then transferred to the acceptor end of tRNA(Ala). Also edits incorrectly charged Ser-tRNA(Ala) and Gly-tRNA(Ala) via its editing domain. This Stenotrophomonas maltophilia (strain K279a) protein is Alanine--tRNA ligase.